Here is a 317-residue protein sequence, read N- to C-terminus: Ferrochelatase (317 aa).

Residues His192 and Glu271 each coordinate Fe cation.

It belongs to the ferrochelatase family.

Its subcellular location is the cytoplasm. It catalyses the reaction heme b + 2 H(+) = protoporphyrin IX + Fe(2+). Its pathway is porphyrin-containing compound metabolism; protoheme biosynthesis; protoheme from protoporphyrin-IX: step 1/1. In terms of biological role, catalyzes the ferrous insertion into protoporphyrin IX. The chain is Ferrochelatase from Citrifermentans bemidjiense (strain ATCC BAA-1014 / DSM 16622 / JCM 12645 / Bem) (Geobacter bemidjiensis).